A 429-amino-acid polypeptide reads, in one-letter code: SVP1-like protein 2 (429 aa).

WD repeat units lie at residues 10–48 (PVLAPVLSVTFNHDNSCFAVGLDHGFRIYESGSCVLRTS), 50–96 (DFGA…QVGV), 178–218 (AHTS…RLYE), and 223–262 (IDKAIIFSIGFSPSGKYLACTSDKSTLHVFDVTRPGGTRP). Residues 262–297 (PITSNGGTAYAAGEPSVTGNNRPSSPYSVASSSGGG) form a disordered region.

Belongs to the WD repeat PROPPIN family.

The protein localises to the vacuole membrane. The protein resides in the cytoplasmic vesicle membrane. Functionally, involved in mitochondrial or peroxisomal functions and amino acid signaling pathways. The chain is SVP1-like protein 2 (apg-14) from Neurospora crassa (strain ATCC 24698 / 74-OR23-1A / CBS 708.71 / DSM 1257 / FGSC 987).